The chain runs to 312 residues: Glycine--tRNA ligase alpha subunit (312 aa).

This sequence belongs to the class-II aminoacyl-tRNA synthetase family. As to quaternary structure, tetramer of two alpha and two beta subunits.

Its subcellular location is the cytoplasm. The catalysed reaction is tRNA(Gly) + glycine + ATP = glycyl-tRNA(Gly) + AMP + diphosphate. The chain is Glycine--tRNA ligase alpha subunit from Delftia acidovorans (strain DSM 14801 / SPH-1).